Consider the following 113-residue polypeptide: Urotensin-2B (113 aa).

Residues 1 to 27 form the signal peptide; the sequence is MKVFSTSLWCGLLTLLSVMNLFKSVRG. Residues 28–103 constitute a propeptide that is removed on maturation; sequence RPHLSSGHEL…LDNLSSSHTK (76 aa). A disulfide bond links C107 and C112.

Belongs to the urotensin-2 family.

Its subcellular location is the secreted. In terms of biological role, potent vasoconstrictor. The sequence is that of Urotensin-2B (Uts2b) from Mus musculus (Mouse).